Reading from the N-terminus, the 278-residue chain is Insulin-like growth factor-binding protein-like 1 (278 aa).

Residues 1–25 (MPRLSLLLPLLLLLLLPLLPPLSPS) form the signal peptide. The IGFBP N-terminal domain occupies 34-109 (RRPKCGPCRP…PEGTGLCVCA (76 aa)). 7 disulfide bridges follow: Cys-38–Cys-63, Cys-41–Cys-65, Cys-46–Cys-66, Cys-52–Cys-69, Cys-77–Cys-91, Cys-85–Cys-106, and Cys-115–Cys-151. Residues 95–153 (AAGAAPEGTGLCVCAQRGTVCGSDGRSYPSVCALRLRARHTPRAHPGHLHKARDGPCEF) enclose the Kazal-like domain. The Ig-like C2-type domain occupies 155-259 (PVVVVPPRSV…GEAESHSTVT (105 aa)). Asn-166 carries an N-linked (GlcNAc...) asparagine glycan. An intrachain disulfide couples Cys-176 to Cys-243.

In terms of tissue distribution, expressed at the highest level in both brain and testis, with lower levels in the prostate, bladder and lung.

Its subcellular location is the secreted. IGF-binding proteins prolong the half-life of IGFs and have been shown to either inhibit or stimulate the growth promoting effects of the IGFs in cell culture. They alter the interaction of IGFs with their cell surface receptors. May be a putative tumor suppressor protein. The protein is Insulin-like growth factor-binding protein-like 1 (IGFBPL1) of Homo sapiens (Human).